A 414-amino-acid chain; its full sequence is Eukaryotic initiation factor 4A-1 (414 aa).

A Q motif motif is present at residues 41-69 (ESFDDMGLQENLLRGIYAYGFEKPSAIQQ). In terms of domain architecture, Helicase ATP-binding spans 72-242 (IVPFCKGLDV…RKFMNKPVRI (171 aa)). 85–92 (AQSGTGKT) contacts ATP. The short motif at 190–193 (DEAD) is the DEAD box element. The Helicase C-terminal domain occupies 253–414 (GIKQFYVNVE…ELPANVADLL (162 aa)).

The protein belongs to the DEAD box helicase family. eIF4A subfamily. As to quaternary structure, eIF4F is a multi-subunit complex, the composition of which varies with external and internal environmental conditions. It is composed of at least EIF4A, EIF4E and EIF4G.

The catalysed reaction is ATP + H2O = ADP + phosphate + H(+). Its function is as follows. ATP-dependent RNA helicase which is a subunit of the eIF4F complex involved in cap recognition and is required for mRNA binding to ribosome. In the current model of translation initiation, eIF4A unwinds RNA secondary structures in the 5'-UTR of mRNAs which is necessary to allow efficient binding of the small ribosomal subunit, and subsequent scanning for the initiator codon. This chain is Eukaryotic initiation factor 4A-1, found in Oryza sativa subsp. japonica (Rice).